A 92-amino-acid polypeptide reads, in one-letter code: Progonadoliberin-1 (92 aa).

Positions 1–23 are cleaved as a signal peptide; that stretch reads MEKSRKILVGVLLFTASVAICLA. At Gln-24 the chain carries Pyrrolidone carboxylic acid. Glycine amide is present on Gly-33.

This sequence belongs to the GnRH family.

The protein localises to the secreted. Stimulates the secretion of gonadotropins. This chain is Progonadoliberin-1 (GNRH1), found in Gallus gallus (Chicken).